The sequence spans 166 residues: Large ribosomal subunit protein uL10 (166 aa).

It belongs to the universal ribosomal protein uL10 family. Part of the ribosomal stalk of the 50S ribosomal subunit. The N-terminus interacts with L11 and the large rRNA to form the base of the stalk. The C-terminus forms an elongated spine to which L12 dimers bind in a sequential fashion forming a multimeric L10(L12)X complex.

Functionally, forms part of the ribosomal stalk, playing a central role in the interaction of the ribosome with GTP-bound translation factors. The sequence is that of Large ribosomal subunit protein uL10 from Mesoplasma florum (strain ATCC 33453 / NBRC 100688 / NCTC 11704 / L1) (Acholeplasma florum).